The primary structure comprises 530 residues: Negative elongation factor A (530 aa).

The HDAg domain maps to 89–248 (WVLMVADILK…TPIPPSRTPL (160 aa)). The tract at residues 125–188 (REKVSECEAS…LQKSTETAQQ (64 aa)) is NELF-C/D-binding. Thr-157 is subject to Phosphothreonine. The RNAPII-binding stretch occupies residues 189 to 248 (LKRSAGVPFHAKGRGLLRKMDTTTPLKGIPKQAPFRSPTTPSVFSPSGNRTPIPPSRTPL). Disordered stretches follow at residues 213 to 248 (PLKG…RTPL), 266 to 296 (GAGR…VENA), and 312 to 409 (SLNS…TAQT). Phosphoserine occurs at positions 225 and 233. Over residues 225 to 238 (SPTTPSVFSPSGNR) the composition is skewed to polar residues. Phosphothreonine is present on Thr-277. Residues 277–291 (TLDTEVVEKPTKEET) show a composition bias toward basic and acidic residues. Low complexity predominate over residues 315–341 (SEPTLPSTSYLPSTPSVVPASSYIPSS). Ser-363 carries the phosphoserine modification.

The protein belongs to the NELF-A family. The NELF complex is composed of NELFA, NELFB, NELFCD and NELFE; NELFA and NELFCD form a stable subcomplex that binds to the N-terminus of NELFB. In vitro, the NELFA:NELFCD subcomplex binds to ssDNA and ssRNA in a sequence- and structure-dependent manner. Interacts with the RNA polymerase II complex when it is not phosphorylated by P-TEFb. Interacts with NELFB. As to expression, ubiquitous. Expressed in brain, heart, spleen, lung, liver, muscle, kidney and testis. Already expressed in 7 dpc embryos.

It localises to the nucleus. Essential component of the NELF complex, a complex that negatively regulates the elongation of transcription by RNA polymerase II. The NELF complex, which acts via an association with the DSIF complex and causes transcriptional pausing, is counteracted by the P-TEFb kinase complex. This chain is Negative elongation factor A (Nelfa), found in Mus musculus (Mouse).